Consider the following 173-residue polypeptide: dCTP deaminase, dUMP-forming (173 aa).

DCTP is bound by residues 93-98 (RSSIGR), Asp111, 119-121 (TLE), Gln138, and Tyr151. Glu121 (proton donor/acceptor) is an active-site residue.

Belongs to the dCTP deaminase family. In terms of assembly, homotrimer.

It catalyses the reaction dCTP + 2 H2O = dUMP + NH4(+) + diphosphate. The protein operates within pyrimidine metabolism; dUMP biosynthesis; dUMP from dCTP: step 1/1. Bifunctional enzyme that catalyzes both the deamination of dCTP to dUTP and the hydrolysis of dUTP to dUMP without releasing the toxic dUTP intermediate. The sequence is that of dCTP deaminase, dUMP-forming from Cytophaga hutchinsonii (strain ATCC 33406 / DSM 1761 / CIP 103989 / NBRC 15051 / NCIMB 9469 / D465).